We begin with the raw amino-acid sequence, 263 residues long: Putative TATA-binding protein pB263R (263 aa).

This sequence belongs to the asfivirus B263R family.

Putative TATA-binding protein. The sequence is that of Putative TATA-binding protein pB263R from African swine fever virus (isolate Tick/Malawi/Lil 20-1/1983) (ASFV).